We begin with the raw amino-acid sequence, 116 residues long: uncharacterized protein (116 aa).

3 helical membrane passes run 8 to 28 (FMIY…VSFA), 39 to 59 (GLLL…NPPF), and 75 to 95 (FLLI…YLMV).

It to M.jannaschii MJ1580.

Its subcellular location is the cell membrane. This is an uncharacterized protein from Methanothermobacter thermautotrophicus (strain ATCC 29096 / DSM 1053 / JCM 10044 / NBRC 100330 / Delta H) (Methanobacterium thermoautotrophicum).